The primary structure comprises 146 residues: uncharacterized protein (146 aa).

An N-terminal signal peptide occupies residues 1 to 24 (MVIYYGKKNCTLLLLLFILCNIYS). N-linked (GlcNAc...) asparagine glycans are attached at residues Asn-99 and Asn-106.

This is an uncharacterized protein from Saccharomyces cerevisiae (strain ATCC 204508 / S288c) (Baker's yeast).